A 229-amino-acid chain; its full sequence is MFSTTSIVLWFTILLPVTLPVSIDNRDLLLKRHVEPNDIQFFNQGVRSSLSYIYQKRDVSDSDNEQVLRKSKKKKKTTSTGTPGNENTTDFASAQEFEKWEGDREGWQISAGLYFDKAIASDSCDSDSEDEDEGRKKFWIFTDDAPVDNENLIVSSEDKLELNYISSGKNLEGLTKVIRKAKGNSTTYNQSKIKFNVDAQGEDQFESGFGSLIPYNSFYLYILLFCIIF.

An N-terminal signal peptide occupies residues 1–20 (MFSTTSIVLWFTILLPVTLP). Positions 63–92 (DNEQVLRKSKKKKKTTSTGTPGNENTTDFA) are disordered. Polar residues predominate over residues 81–92 (GTPGNENTTDFA). Residues Asn-87, Asn-184, and Asn-189 are each glycosylated (N-linked (GlcNAc...) asparagine). Residue Gly-208 is the site of GPI-anchor amidated glycine attachment. Positions 209–229 (FGSLIPYNSFYLYILLFCIIF) are cleaved as a propeptide — removed in mature form.

Its subcellular location is the cell membrane. Its function is as follows. Predicted GPI-anchored protein which may have a role during host infection. This Candida albicans (strain SC5314 / ATCC MYA-2876) (Yeast) protein is Predicted GPI-anchored protein 19 (PGA19).